The sequence spans 874 residues: Coatomer subunit gamma-1 (874 aa).

The span at 1-11 shows a compositional bias: basic and acidic residues; it reads MLKKFDKKDEE. A disordered region spans residues 1–21; that stretch reads MLKKFDKKDEESGGGSNPFQH. HEAT repeat units lie at residues 64–101, 283–320, 322–355, and 356–392; these read TEAT…IAED, KELA…KHPS, VTAC…GSES, and SIDR…KYPR. Thr-594 carries the phosphothreonine modification. The segment at 609 to 874 is interaction with ZNF289/ARFGAP2; it reads RQEIFQEQLA…PVDIILASVG (266 aa).

The protein belongs to the COPG family. Oligomeric complex that consists of at least the alpha, beta, beta', gamma, delta, epsilon and zeta subunits. Interacts with ZNF289/ARFGAP2 through its C-terminal appendage domain. Interacts with EGFR upon EGF treatment; interaction is essential for regulation of EGF-dependent nuclear transport of EGFR by retrograde trafficking from the Golgi to the ER. The coatomer interacts with KDEL receptors; the interaction is important for retrograde trafficking of KDEL-bearing proteins from the Golgi to the endoplasmic reticulum. Interacts with COPB1. Interacts with TMED10 (via C-terminus). Interacts with TMED2, TMED3, TMED7 and TMED9.

The protein localises to the cytoplasm. Its subcellular location is the golgi apparatus membrane. The protein resides in the cytoplasmic vesicle. It localises to the COPI-coated vesicle membrane. Functionally, the coatomer is a cytosolic protein complex that binds to dilysine motifs and reversibly associates with Golgi non-clathrin-coated vesicles, which further mediate biosynthetic protein transport from the ER, via the Golgi up to the trans Golgi network. Coatomer complex is required for budding from Golgi membranes, and is essential for the retrograde Golgi-to-ER transport of dilysine-tagged proteins. In mammals, the coatomer can only be recruited by membranes associated to ADP-ribosylation factors (ARFs), which are small GTP-binding proteins; the complex also influences the Golgi structural integrity, as well as the processing, activity, and endocytic recycling of LDL receptors. Required for limiting lipid storage in lipid droplets. Involved in lipid homeostasis by regulating the presence of perilipin family members PLIN2 and PLIN3 at the lipid droplet surface and promoting the association of adipocyte triglyceride lipase (PNPLA2) with the lipid droplet surface to mediate lipolysis. The sequence is that of Coatomer subunit gamma-1 (COPG1) from Homo sapiens (Human).